A 2006-amino-acid chain; its full sequence is E3 ubiquitin-protein ligase PRT6 (2006 aa).

The UBR-type zinc finger occupies 119–189 (GVCGSVWGQN…PDGFCSNHKG (71 aa)). 2 disordered regions span residues 1167–1186 (LSSS…SDSV) and 1338–1380 (DHQP…AGSD). A compositionally biased stretch (basic and acidic residues) spans 1338–1348 (DHQPHEAENCS). Polar residues predominate over residues 1349–1360 (EKNSVGGPSTLQ). Residues 1364–1377 (PDIRSRQTSRRPDA) are compositionally biased toward basic and acidic residues. The RING-type; degenerate zinc finger occupies 1395-1440 (CGHAVHQSCLERYLKSLKERSGRRTVFEGAHIVDLKKKEFLCPVCR).

The protein belongs to the E3 ubiquitin-protein ligase UBR1-like family.

It carries out the reaction S-ubiquitinyl-[E2 ubiquitin-conjugating enzyme]-L-cysteine + [acceptor protein]-L-lysine = [E2 ubiquitin-conjugating enzyme]-L-cysteine + N(6)-ubiquitinyl-[acceptor protein]-L-lysine.. It participates in protein modification; protein ubiquitination. Its function is as follows. Ubiquitin protein ligase which is a component of the N-end rule pathway with arginine specificity, and functions with the arginyltransferases ATE1 and ATE2. Recognizes and binds to proteins bearing specific N-terminal residues that are destabilizing according to the N-end rule, leading to their ubiquitination and subsequent degradation. Does not participate in degradation of proteins with N-terminal Phe or Leu. The N-end rule pathway regulates seed after-ripening, seedling sugar sensitivity, seedling lipid breakdown, and abscisic acid (ABA) sensitivity of germination. The N-end rule pathway regulates various aspects of leaf and shoot development. Involved in the ubiquitination and subsequent degradation of RAP2-12, an activator of hypoxic gene expression. The ubiquitination occurs after the N-arginylation of RAP2-12 by ATE1 or ATE2 under aerobic conditions. The end-rule pathway plays a role in regulating the timing and amplitude of the immune response following infection with the bacterial pathogen Pseudomonas syringae pv tomato. Regulates the biosynthesis of plant-defense metabolites such as glucosinolates, and the biosynthesis and response to the phytohormone jasmonate (JA), which plays a key role in plant immunity. Controls the expression of specific defense-response genes, activates the synthesis pathway for the phytoalexin camalexin, and influences basal resistance to the hemibiotroph pathogen Pseudomonas syringae pv tomato. Coordinates the mobilization of seed storage reserves and regulates the abundance and activities of several proteases following seed germination. This is E3 ubiquitin-protein ligase PRT6 from Arabidopsis thaliana (Mouse-ear cress).